Here is a 385-residue protein sequence, read N- to C-terminus: MHPKSQSKQLFRQKYQKSPTLNVYAPGRVNIIGEHTDYNDGFVMPCAINYGTAISGAKRDDHRFNVYAADLDEFDEFRLDQPIIPNPSKKWTGYVRGVVKFVQERCPEFRQGADLVISGDVPLSSGLSSSASLEVAVGKFCQLLGDLPLNNTDIALIGQKAENRFVGANCGNMDQLISALGQADHLLMIDCRSLETVPTPVPEDIAVMIVNSHVKHDLVTGEYNTRRQQCETAAKFFGVKALRDVSIEQFQKREAELTALDPDTAKRARHIVTENQRVLDAAYALNHSDISRLGELMNASHVSMRDDFEITTPEIDYLVELAQSVIGKSGGARMTGGGFGGCIVGLAPKDKVDAVRQIIAENYEKRTGLKESFYVCTASQGVHQC.

34-37 is a substrate binding site; the sequence is EHTD. Position 124-130 (124-130) interacts with ATP; the sequence is SSGLSSS. Mg(2+) contacts are provided by serine 130 and glutamate 162. Aspartate 174 (proton acceptor) is an active-site residue. Position 223 (tyrosine 223) interacts with substrate.

It belongs to the GHMP kinase family. GalK subfamily.

Its subcellular location is the cytoplasm. The catalysed reaction is alpha-D-galactose + ATP = alpha-D-galactose 1-phosphate + ADP + H(+). It participates in carbohydrate metabolism; galactose metabolism. Functionally, catalyzes the transfer of the gamma-phosphate of ATP to D-galactose to form alpha-D-galactose-1-phosphate (Gal-1-P). This chain is Galactokinase, found in Actinobacillus succinogenes (strain ATCC 55618 / DSM 22257 / CCUG 43843 / 130Z).